Reading from the N-terminus, the 473-residue chain is ATP synthase subunit beta (473 aa).

158–165 (GGAGVGKT) provides a ligand contact to ATP.

Belongs to the ATPase alpha/beta chains family. F-type ATPases have 2 components, CF(1) - the catalytic core - and CF(0) - the membrane proton channel. CF(1) has five subunits: alpha(3), beta(3), gamma(1), delta(1), epsilon(1). CF(0) has three main subunits: a(1), b(2) and c(9-12). The alpha and beta chains form an alternating ring which encloses part of the gamma chain. CF(1) is attached to CF(0) by a central stalk formed by the gamma and epsilon chains, while a peripheral stalk is formed by the delta and b chains.

The protein resides in the cell membrane. The catalysed reaction is ATP + H2O + 4 H(+)(in) = ADP + phosphate + 5 H(+)(out). Functionally, produces ATP from ADP in the presence of a proton gradient across the membrane. The catalytic sites are hosted primarily by the beta subunits. The polypeptide is ATP synthase subunit beta (Geobacillus thermoleovorans (Bacillus thermoleovorans)).